Reading from the N-terminus, the 78-residue chain is Defensin-like protein 308 (78 aa).

Positions 1 to 19 (MKTSAFFIAVLLILSCSSS) are cleaved as a signal peptide. 3 cysteine pairs are disulfide-bonded: C31/C50, C37/C55, and C41/C57.

The protein belongs to the DEFL family.

The protein resides in the secreted. The polypeptide is Defensin-like protein 308 (Arabidopsis thaliana (Mouse-ear cress)).